A 212-amino-acid chain; its full sequence is Acyl-homoserine-lactone synthase (212 aa).

Belongs to the autoinducer synthase family.

The catalysed reaction is a fatty acyl-[ACP] + S-adenosyl-L-methionine = an N-acyl-L-homoserine lactone + S-methyl-5'-thioadenosine + holo-[ACP] + H(+). Its function is as follows. Required for the synthesis of OHHL (N-(3-oxohexanoyl)-L-homoserine lactone), an autoinducer molecule which binds to ExpR and thus acts in virulence (soft rot disease) through the activation of genes for plant tissue macerating enzymes. The protein is Acyl-homoserine-lactone synthase (expI) of Dickeya dadantii (strain 3937) (Erwinia chrysanthemi (strain 3937)).